A 213-amino-acid chain; its full sequence is Large ribosomal subunit protein uL1 (213 aa).

The protein belongs to the universal ribosomal protein uL1 family. Part of the 50S ribosomal subunit.

Its function is as follows. Binds directly to 23S rRNA. Probably involved in E site tRNA release. In terms of biological role, protein L1 is also a translational repressor protein, it controls the translation of its operon by binding to its mRNA. This chain is Large ribosomal subunit protein uL1, found in Methanosarcina acetivorans (strain ATCC 35395 / DSM 2834 / JCM 12185 / C2A).